Consider the following 330-residue polypeptide: Phenylalanine--tRNA ligase alpha subunit (330 aa).

Residue Glu246 participates in Mg(2+) binding.

Belongs to the class-II aminoacyl-tRNA synthetase family. Phe-tRNA synthetase alpha subunit type 1 subfamily. Tetramer of two alpha and two beta subunits. It depends on Mg(2+) as a cofactor.

It is found in the cytoplasm. It carries out the reaction tRNA(Phe) + L-phenylalanine + ATP = L-phenylalanyl-tRNA(Phe) + AMP + diphosphate + H(+). This Sulfurimonas denitrificans (strain ATCC 33889 / DSM 1251) (Thiomicrospira denitrificans (strain ATCC 33889 / DSM 1251)) protein is Phenylalanine--tRNA ligase alpha subunit.